Reading from the N-terminus, the 227-residue chain is Cytochrome c oxidase subunit 2 (227 aa).

Residues 1–14 (MAYPLQLGFQDAVS) are Mitochondrial intermembrane-facing. A helical transmembrane segment spans residues 15 to 45 (PIMEELLYFHDHTLMIVFLISSLVLYIITLM). The Mitochondrial matrix portion of the chain corresponds to 46-59 (LTTKLTHTNTMNAQ). Residues 60 to 87 (EVETVWTILPAIILILIALPSLRILYMM) form a helical membrane-spanning segment. The Mitochondrial intermembrane portion of the chain corresponds to 88–227 (DEINNPSLTV…TFEKWTASLL (140 aa)). Residues His-161, Cys-196, Glu-198, Cys-200, His-204, and Met-207 each contribute to the Cu cation site. Glu-198 contacts Mg(2+).

The protein belongs to the cytochrome c oxidase subunit 2 family. Component of the cytochrome c oxidase (complex IV, CIV), a multisubunit enzyme composed of 14 subunits. The complex is composed of a catalytic core of 3 subunits MT-CO1, MT-CO2 and MT-CO3, encoded in the mitochondrial DNA, and 11 supernumerary subunits COX4I, COX5A, COX5B, COX6A, COX6B, COX6C, COX7A, COX7B, COX7C, COX8 and NDUFA4, which are encoded in the nuclear genome. The complex exists as a monomer or a dimer and forms supercomplexes (SCs) in the inner mitochondrial membrane with NADH-ubiquinone oxidoreductase (complex I, CI) and ubiquinol-cytochrome c oxidoreductase (cytochrome b-c1 complex, complex III, CIII), resulting in different assemblies (supercomplex SCI(1)III(2)IV(1) and megacomplex MCI(2)III(2)IV(2)). Found in a complex with TMEM177, COA6, COX18, COX20, SCO1 and SCO2. Interacts with TMEM177 in a COX20-dependent manner. Interacts with COX20. Interacts with COX16. Cu cation serves as cofactor.

Its subcellular location is the mitochondrion inner membrane. The catalysed reaction is 4 Fe(II)-[cytochrome c] + O2 + 8 H(+)(in) = 4 Fe(III)-[cytochrome c] + 2 H2O + 4 H(+)(out). Its function is as follows. Component of the cytochrome c oxidase, the last enzyme in the mitochondrial electron transport chain which drives oxidative phosphorylation. The respiratory chain contains 3 multisubunit complexes succinate dehydrogenase (complex II, CII), ubiquinol-cytochrome c oxidoreductase (cytochrome b-c1 complex, complex III, CIII) and cytochrome c oxidase (complex IV, CIV), that cooperate to transfer electrons derived from NADH and succinate to molecular oxygen, creating an electrochemical gradient over the inner membrane that drives transmembrane transport and the ATP synthase. Cytochrome c oxidase is the component of the respiratory chain that catalyzes the reduction of oxygen to water. Electrons originating from reduced cytochrome c in the intermembrane space (IMS) are transferred via the dinuclear copper A center (CU(A)) of subunit 2 and heme A of subunit 1 to the active site in subunit 1, a binuclear center (BNC) formed by heme A3 and copper B (CU(B)). The BNC reduces molecular oxygen to 2 water molecules using 4 electrons from cytochrome c in the IMS and 4 protons from the mitochondrial matrix. In Hippopotamus amphibius (Hippopotamus), this protein is Cytochrome c oxidase subunit 2 (MT-CO2).